We begin with the raw amino-acid sequence, 505 residues long: Surface lipoprotein assembly modifier 2 (505 aa).

Positions 1-19 are cleaved as a signal peptide; it reads MLYFRYGFLVVWCAAGVSA. Positions 23–188 are N-terminal domain; the sequence is ADAPAILDDK…RFRKKTEGLT (166 aa). A C-terminal probable beta barrel region spans residues 189 to 505; sequence GWRFSGGISP…EVFVSADWRF (317 aa). The next 14 membrane-spanning stretches (beta stranded) occupy residues 190-200, 232-243, 248-258, 273-283, 287-297, 326-335, 340-350, 368-377, 381-391, 411-420, 427-437, 456-465, 472-482, and 495-505; these read WRFSGGISPAV, LNYEIEAEKLTP, HYLLFRSNIGG, FGRAYLGWQYK, QTAGILPFYQV, VGVQLSHTYR, WQFSVALEHYR, GFYVSSAKRL, ATVFGGWQFVR, NGVYAGWAQE, LNSRVSASYAR, WNVSLALSHD, IVPALNYRFGR, and SEVFVSADWRF.

Belongs to the Slam family.

The protein localises to the cell outer membrane. Required for correct export to the cell surface of cell outer membrane lipoprotein HpuA heterologously in E.coli (hpuA does not exist in N.meningitidis strain MC58). This Neisseria meningitidis serogroup B (strain ATCC BAA-335 / MC58) protein is Surface lipoprotein assembly modifier 2.